The chain runs to 748 residues: Catalase-peroxidase (748 aa).

The tryptophyl-tyrosyl-methioninium (Trp-Tyr) (with M-264) cross-link spans 92–238; the sequence is WHSAGTYRIG…LAAVQMGLIY (147 aa). The active-site Proton acceptor is His93. Positions 238 to 264 form a cross-link, tryptophyl-tyrosyl-methioninium (Tyr-Met) (with W-92); it reads YVNPEGPDGNPDPIASARDIRDTFARM. His279 contributes to the heme b binding site.

Belongs to the peroxidase family. Peroxidase/catalase subfamily. Homodimer or homotetramer. Heme b is required as a cofactor. Formation of the three residue Trp-Tyr-Met cross-link is important for the catalase, but not the peroxidase activity of the enzyme.

The enzyme catalyses H2O2 + AH2 = A + 2 H2O. It carries out the reaction 2 H2O2 = O2 + 2 H2O. Functionally, bifunctional enzyme with both catalase and broad-spectrum peroxidase activity. The polypeptide is Catalase-peroxidase (Xanthomonas axonopodis pv. citri (strain 306)).